We begin with the raw amino-acid sequence, 218 residues long: UPF0502 protein Shewana3_1622 (218 aa).

This sequence belongs to the UPF0502 family.

The protein is UPF0502 protein Shewana3_1622 of Shewanella sp. (strain ANA-3).